The chain runs to 72 residues: Protein CYSTEINE-RICH TRANSMEMBRANE MODULE 1 (72 aa).

The segment covering 1 to 11 (MSQYDHNQSAG) has biased composition (polar residues). Residues 1 to 46 (MSQYDHNQSAGANPPPPMSTCTSPPPPIGYPTNQPSHGSVAQGKVE) form a disordered region. A compositionally biased stretch (pro residues) spans 13–29 (NPPPPMSTCTSPPPPIG). The helical transmembrane segment at 49–65 (SKGDGFFKGCLAAMCCC) threads the bilayer.

The protein belongs to the CYSTM1 family. Heterodimers. Binds weakly to CYSTM7 and WIH1/CYSTM13. Mostly expressed in roots, flowers and siliques and, to a lower extent, in stems and leaves.

The protein localises to the cell membrane. Its subcellular location is the nucleus. May be involved in aluminium (Al) tolerance. Involved in resistance to abiotic stress. This is Protein CYSTEINE-RICH TRANSMEMBRANE MODULE 1 from Arabidopsis thaliana (Mouse-ear cress).